The sequence spans 576 residues: Sulfite reductase [NADPH] hemoprotein beta-component (576 aa).

[4Fe-4S] cluster contacts are provided by cysteine 439, cysteine 445, cysteine 485, and cysteine 489. Cysteine 489 provides a ligand contact to siroheme.

This sequence belongs to the nitrite and sulfite reductase 4Fe-4S domain family. As to quaternary structure, alpha(8)-beta(8). The alpha component is a flavoprotein, the beta component is a hemoprotein. The cofactor is siroheme. It depends on [4Fe-4S] cluster as a cofactor.

It carries out the reaction hydrogen sulfide + 3 NADP(+) + 3 H2O = sulfite + 3 NADPH + 4 H(+). Its pathway is sulfur metabolism; hydrogen sulfide biosynthesis; hydrogen sulfide from sulfite (NADPH route): step 1/1. Functionally, component of the sulfite reductase complex that catalyzes the 6-electron reduction of sulfite to sulfide. This is one of several activities required for the biosynthesis of L-cysteine from sulfate. The sequence is that of Sulfite reductase [NADPH] hemoprotein beta-component from Aliivibrio salmonicida (strain LFI1238) (Vibrio salmonicida (strain LFI1238)).